A 229-amino-acid chain; its full sequence is Sugar fermentation stimulation protein homolog (229 aa).

The protein belongs to the SfsA family.

The protein is Sugar fermentation stimulation protein homolog of Caldanaerobacter subterraneus subsp. tengcongensis (strain DSM 15242 / JCM 11007 / NBRC 100824 / MB4) (Thermoanaerobacter tengcongensis).